The primary structure comprises 417 residues: MEVNPPKQEHLLALKVMRLTKPTLFTNIPVTCEEKDLPGDLFNQLMKDDPSTVNGAEILMLGEMLTLPQNFGNIFLGETFSSYISVHNDSNQVVKDILVKADLQTSSQRLNLSASNAAVAELKPDCCIDDVIHHEVKEIGTHILVCAVSYTTQGGEKMYFRKFFKFQVLKPLDVKTKFYNAESDLSSVTDEVFLEAQIQNITTSPMFMEKVSLEPSIMYNVTELNSVTQAGECISTFGSRGYLQPMDTRQYLYCLKPKKEFAEKAGIIKGVTVIGKLDIVWKTNLGERGRLQTSQLQRMAPGYGDVRLSLEAIPDTVNLEEPFHITCKITNCSERMMDLVLEMCNTNSIHWCGISGRQLGKLHPSSSLCLALTLLSSVQGLQSVSGLRLTDTFLKRTYEYDDIAQVCVVSAAVEVEA.

Belongs to the TRAPPC13 family. Part of the multisubunit TRAPP (transport protein particle) complex.

The polypeptide is Trafficking protein particle complex subunit 13 (Trappc13) (Mus musculus (Mouse)).